The chain runs to 154 residues: UPF0225 protein YE2246 (154 aa).

This sequence belongs to the UPF0225 family.

This is UPF0225 protein YE2246 from Yersinia enterocolitica serotype O:8 / biotype 1B (strain NCTC 13174 / 8081).